Here is a 116-residue protein sequence, read N- to C-terminus: Putative anti-sigma factor antagonist BtrV (116 aa).

The STAS domain occupies 1 to 110 (MKLTMDKIDG…NSREAAAAAF (110 aa)). A Phosphoserine; by BtrW modification is found at Ser-55.

The protein belongs to the anti-sigma-factor antagonist family. As to quaternary structure, interacts with BtrW. Post-translationally, phosphorylated by BtrW. Dephosphorylated by BtrU.

In terms of biological role, possible positive regulator of sigma-B activity. Non-phosphorylated BtrV binds to BtrW, preventing its association with an unknown partner(s) that might be sigma-B. When phosphorylated, releases BtrW, which is then free to complex with and inactivate its partner. Involved in type III secretion system (T3SS). The polypeptide is Putative anti-sigma factor antagonist BtrV (btrV) (Bordetella bronchiseptica (strain ATCC BAA-588 / NCTC 13252 / RB50) (Alcaligenes bronchisepticus)).